Here is a 1756-residue protein sequence, read N- to C-terminus: Transposon Ty1-BR Gag-Pol polyprotein (1756 aa).

Polar residues-rich tracts occupy residues 1–10 (MESQQLSNYP), 48–60 (TKANSQQTTTPAS), and 127–152 (QSQFPQYPSSVGTPLSTPSPESGNTF). Disordered stretches follow at residues 1–93 (MESQ…MMTQ), 126–173 (PQSQ…RPPP), and 352–421 (GSRN…SKST). Over residues 153–165 (TDSSSADSDMTST) the composition is skewed to low complexity. An RNA-binding region spans residues 299–401 (NNGIHINNKV…NSKSKTARAH (103 aa)). Positions 402-418 (NVSTSNNSPSTDNDSIS) are enriched in low complexity. Serine 416 is subject to Phosphoserine. Aspartate 461 functions as the For protease activity; shared with dimeric partner in the catalytic mechanism. Positions 583-640 (NVHTSESTRKYPYPFIHRMLAHANAQTIRYSLKNNTITYFNESDVDWSSAIDYQCPDC) are integrase-type zinc finger-like. Positions 660–835 (NSYEPFQYLH…AGLDISTLLP (176 aa)) constitute an Integrase catalytic domain. Mg(2+) contacts are provided by aspartate 671 and aspartate 736. 2 disordered regions span residues 956–1088 (SKAV…TEKR) and 1142–1173 (PTELSDSFKELPPINSRQTNSSLGGIGDSNAY). Low complexity predominate over residues 960-969 (SPTDSTPPST). 2 stretches are compositionally biased toward polar residues: residues 1005–1017 (STPQISDIESTDS) and 1031–1043 (MSQSNTHESSYAS). Positions 1044–1053 (KSKDFRHSDS) are enriched in basic and acidic residues. Positions 1054-1082 (YSDNETNHTNVPISSTGGTNNKTVPQTSE) are enriched in polar residues. The Bipartite nuclear localization signal signature appears at 1179–1213 (KKRSLEDNETEIKVSRDTWNTKNMRSLEPPRSKKR). In terms of domain architecture, Reverse transcriptase Ty1/copia-type spans 1339–1477 (NNYYITQLDI…DILGLEIKYQ (139 aa)). The Mg(2+) site is built by aspartate 1347, aspartate 1428, aspartate 1429, aspartate 1611, glutamate 1653, and aspartate 1686. The region spanning 1611–1753 (DASYGNQPYY…IKTFKLLTNK (143 aa)) is the RNase H Ty1/copia-type domain.

As to quaternary structure, the capsid protein forms a homotrimer, from which the VLPs are assembled. The protease is a homodimer, whose active site consists of two apposed aspartic acid residues. In terms of processing, initially, virus-like particles (VLPs) are composed of the structural unprocessed proteins Gag and Gag-Pol, and also contain the host initiator methionine tRNA (tRNA(i)-Met) which serves as a primer for minus-strand DNA synthesis, and a dimer of genomic Ty RNA. Processing of the polyproteins occurs within the particle and proceeds by an ordered pathway, called maturation. First, the protease (PR) is released by autocatalytic cleavage of the Gag-Pol polyprotein yielding capsid protein p45 and a Pol-p154 precursor protein. This cleavage is a prerequisite for subsequent processing of Pol-p154 at the remaining sites to release the mature structural and catalytic proteins. Maturation takes place prior to the RT reaction and is required to produce transposition-competent VLPs.

Its subcellular location is the cytoplasm. The protein localises to the nucleus. The catalysed reaction is DNA(n) + a 2'-deoxyribonucleoside 5'-triphosphate = DNA(n+1) + diphosphate. It catalyses the reaction Endonucleolytic cleavage to 5'-phosphomonoester.. Capsid protein (CA) is the structural component of the virus-like particle (VLP), forming the shell that encapsulates the retrotransposons dimeric RNA genome. The particles are assembled from trimer-clustered units and there are holes in the capsid shells that allow for the diffusion of macromolecules. CA also has nucleocapsid-like chaperone activity, promoting primer tRNA(i)-Met annealing to the multipartite primer-binding site (PBS), dimerization of Ty1 RNA and initiation of reverse transcription. In terms of biological role, the aspartyl protease (PR) mediates the proteolytic cleavages of the Gag and Gag-Pol polyproteins after assembly of the VLP. Its function is as follows. Reverse transcriptase/ribonuclease H (RT) is a multifunctional enzyme that catalyzes the conversion of the retro-elements RNA genome into dsDNA within the VLP. The enzyme displays a DNA polymerase activity that can copy either DNA or RNA templates, and a ribonuclease H (RNase H) activity that cleaves the RNA strand of RNA-DNA heteroduplexes during plus-strand synthesis and hydrolyzes RNA primers. The conversion leads to a linear dsDNA copy of the retrotransposon that includes long terminal repeats (LTRs) at both ends. Functionally, integrase (IN) targets the VLP to the nucleus, where a subparticle preintegration complex (PIC) containing at least integrase and the newly synthesized dsDNA copy of the retrotransposon must transit the nuclear membrane. Once in the nucleus, integrase performs the integration of the dsDNA into the host genome. The polypeptide is Transposon Ty1-BR Gag-Pol polyprotein (TY1B-BR) (Saccharomyces cerevisiae (strain ATCC 204508 / S288c) (Baker's yeast)).